Here is a 416-residue protein sequence, read N- to C-terminus: Diaminopimelate decarboxylase (416 aa).

Lys-60 is subject to N6-(pyridoxal phosphate)lysine. Residues Gly-240 and 274-277 each bind pyridoxal 5'-phosphate; that span reads EPGR. Positions 277, 313, and 317 each coordinate substrate. Catalysis depends on Cys-343, which acts as the Proton donor. Substrate is bound by residues Glu-344 and Tyr-371. Tyr-371 contacts pyridoxal 5'-phosphate.

The protein belongs to the Orn/Lys/Arg decarboxylase class-II family. LysA subfamily. As to quaternary structure, homodimer. Pyridoxal 5'-phosphate serves as cofactor.

The catalysed reaction is meso-2,6-diaminopimelate + H(+) = L-lysine + CO2. It functions in the pathway amino-acid biosynthesis; L-lysine biosynthesis via DAP pathway; L-lysine from DL-2,6-diaminopimelate: step 1/1. In terms of biological role, specifically catalyzes the decarboxylation of meso-diaminopimelate (meso-DAP) to L-lysine. The protein is Diaminopimelate decarboxylase of Pseudomonas fluorescens.